Consider the following 197-residue polypeptide: Viral polyamine acetyltransferase (197 aa).

N22 provides a ligand contact to acetyl-CoA. The active site involves E27. One can recognise an N-acetyltransferase domain in the interval 102–182 (SYTPDDKCLY…YQYGITKPFD (81 aa)). Acetyl-CoA contacts are provided by I115, S117, G121, G123, A125, T126, T149, N150, and K159.

The protein belongs to the acetyltransferase family.

The enzyme catalyses spermine + acetyl-CoA = N(1)-acetylspermine + CoA + H(+). The catalysed reaction is spermidine + acetyl-CoA = N(1)-acetylspermidine + CoA + H(+). It carries out the reaction spermidine + acetyl-CoA = N(8)-acetylspermidine + CoA + H(+). It catalyses the reaction putrescine + acetyl-CoA = N-acetylputrescine + CoA + H(+). The enzyme catalyses cadaverine + acetyl-CoA = N-acetylcadaverine + CoA + H(+). The catalysed reaction is sym-homospermidine + acetyl-CoA = N(1)-acetyl-sym-homospermidine + CoA + H(+). Acetylates polyamines such as spermine, spermidine, cadaverine, homospermidine and putrescine (the latter with low efficiency). May play a role in the regulation of polyamine catabolism in the host during viral replication. The chain is Viral polyamine acetyltransferase from Chlorella (PBCV-1).